A 282-amino-acid chain; its full sequence is Endochitinase 4 (282 aa).

Residues 1–282 (GAKNGVHPPL…TWSINWDGSK (282 aa)) form the GH18 domain. E112 (proton donor) is an active-site residue. N265 is a glycosylation site (N-linked (GlcNAc...) asparagine).

Belongs to the glycosyl hydrolase 18 family. Chitinase class V subfamily.

The protein resides in the secreted. It carries out the reaction Random endo-hydrolysis of N-acetyl-beta-D-glucosaminide (1-&gt;4)-beta-linkages in chitin and chitodextrins.. Its function is as follows. Secreted chitinase involved in the degradation of chitin, a component of the cell walls of fungi and exoskeletal elements of some animals (including worms and arthropods). Participates in the infection process and directly acts in the penetration process of the host cuticle. This is Endochitinase 4 (chi4) from Metarhizium anisopliae (Entomophthora anisopliae).